The following is a 232-amino-acid chain: Ribosomal RNA small subunit methyltransferase G (232 aa).

S-adenosyl-L-methionine contacts are provided by residues glycine 75, phenylalanine 80, 126–127 (AE), and arginine 143.

This sequence belongs to the methyltransferase superfamily. RNA methyltransferase RsmG family.

The protein localises to the cytoplasm. Specifically methylates the N7 position of a guanine in 16S rRNA. The sequence is that of Ribosomal RNA small subunit methyltransferase G from Fusobacterium nucleatum subsp. nucleatum (strain ATCC 25586 / DSM 15643 / BCRC 10681 / CIP 101130 / JCM 8532 / KCTC 2640 / LMG 13131 / VPI 4355).